Consider the following 301-residue polypeptide: Vomeronasal type-1 receptor 4 (301 aa).

At 1–15 (MASRYVAVGMMLSQT) the chain is on the extracellular side. A helical membrane pass occupies residues 16–36 (VVGVLGSFSLLLHYLSLHYIG). At 37–48 (CRLRSADLIVKH) the chain is on the cytoplasmic side. Residues 49–69 (LIAASFLTLLCKGVPQTMAAF) form a helical membrane-spanning segment. The Extracellular segment spans residues 70-88 (RVRYFLNAIGCKLVFYLHR). A helical transmembrane segment spans residues 89 to 107 (VGRGVSTGTTCLLSVFQVI). The Cytoplasmic portion of the chain corresponds to 108–126 (TVSSRKSRWAKLKEKAPKH). A helical transmembrane segment spans residues 127–147 (VGFSVLLCWILCMLVNIIFPI). Residues 148-185 (YVTGKRNHTNITVNKDLGDCCGRGNNKIAQTLRAMLLS) are Extracellular-facing. Asn-154 and Asn-157 each carry an N-linked (GlcNAc...) asparagine glycan. A helical membrane pass occupies residues 186 to 206 (FPDVLCLGFMLWASSSMVCIL). Topologically, residues 207 to 234 (HRHKQRVQHIHRSNLSPRASPENRATQS) are cytoplasmic. The chain crosses the membrane as a helical span at residues 235–255 (ILIPVSTFVSSYTLSCLLQVC). Residues 256–264 (MALLDNPNS) are Extracellular-facing. A helical transmembrane segment spans residues 265–285 (LLVNTSALMSACFPTLSPFVL). Residues 286–301 (MSCDPSVYRLCFAWKR) lie on the Cytoplasmic side of the membrane.

The protein belongs to the G-protein coupled receptor 1 family.

The protein localises to the cell membrane. Its function is as follows. Putative pheromone receptor. The sequence is that of Vomeronasal type-1 receptor 4 (VN1R4) from Pongo pygmaeus (Bornean orangutan).